Consider the following 410-residue polypeptide: Ribonucleoside-diphosphate reductase small chain (410 aa).

Positions 1–20 are enriched in polar residues; the sequence is MSVQTSPSKQVTSGIQNLNM. Disordered regions lie at residues 1 to 43 and 55 to 78; these read MSVQ…DEDL and NANKKAAEAKKMAPTLKPEEANEP. Basic and acidic residues-rich tracts occupy residues 23–43 and 55–65; these read PAKKLDFGATDKENKPFDEDL and NANKKAAEAKK. 3 residues coordinate Fe cation: D146, E177, and H180. Y184 is a catalytic residue. Residues E240, E274, and H277 each coordinate Fe cation.

The protein belongs to the ribonucleoside diphosphate reductase small chain family. In terms of assembly, heterodimer of a large and a small subunit. Fe cation serves as cofactor.

It carries out the reaction a 2'-deoxyribonucleoside 5'-diphosphate + [thioredoxin]-disulfide + H2O = a ribonucleoside 5'-diphosphate + [thioredoxin]-dithiol. Its function is as follows. Provides the precursors necessary for DNA synthesis. Catalyzes the biosynthesis of deoxyribonucleotides from the corresponding ribonucleotides. This chain is Ribonucleoside-diphosphate reductase small chain (rnr-2), found in Neurospora crassa (strain ATCC 24698 / 74-OR23-1A / CBS 708.71 / DSM 1257 / FGSC 987).